A 405-amino-acid chain; its full sequence is Enoyl-[acyl-carrier-protein] reductase [NADH] (405 aa).

NAD(+) is bound by residues 51 to 56 (GASSGY), 77 to 78 (FE), 114 to 115 (DA), and 142 to 143 (LA). Substrate is bound at residue Y228. The active-site Proton donor is the Y238. Residues K247 and 276-278 (VVT) contribute to the NAD(+) site.

This sequence belongs to the TER reductase family. In terms of assembly, monomer.

The catalysed reaction is a 2,3-saturated acyl-[ACP] + NAD(+) = a (2E)-enoyl-[ACP] + NADH + H(+). Its pathway is lipid metabolism; fatty acid biosynthesis. Functionally, involved in the final reduction of the elongation cycle of fatty acid synthesis (FAS II). Catalyzes the reduction of a carbon-carbon double bond in an enoyl moiety that is covalently linked to an acyl carrier protein (ACP). The chain is Enoyl-[acyl-carrier-protein] reductase [NADH] from Chromohalobacter salexigens (strain ATCC BAA-138 / DSM 3043 / CIP 106854 / NCIMB 13768 / 1H11).